Here is a 122-residue protein sequence, read N- to C-terminus: Small ribosomal subunit protein uS13 (122 aa).

The tract at residues 99 to 122 (RGQRTHTNARTRKGPAKAIAGKKK) is disordered.

The protein belongs to the universal ribosomal protein uS13 family. In terms of assembly, part of the 30S ribosomal subunit. Forms a loose heterodimer with protein S19. Forms two bridges to the 50S subunit in the 70S ribosome.

Its function is as follows. Located at the top of the head of the 30S subunit, it contacts several helices of the 16S rRNA. In the 70S ribosome it contacts the 23S rRNA (bridge B1a) and protein L5 of the 50S subunit (bridge B1b), connecting the 2 subunits; these bridges are implicated in subunit movement. Contacts the tRNAs in the A and P-sites. The protein is Small ribosomal subunit protein uS13 of Rhizobium leguminosarum bv. trifolii (strain WSM2304).